Here is a 583-residue protein sequence, read N- to C-terminus: Putative rhophilin-2-like protein RHPN2P1 (583 aa).

Positions 26 to 375 constitute a BRO1 domain; sequence PLIPLGLKET…RLTYAQHQED (350 aa). Residues 412–490 enclose the PDZ domain; it reads RSNRFTAEEG…DEIEMKVVSL (79 aa).

The sequence is that of Putative rhophilin-2-like protein RHPN2P1 (RHPN2P1) from Homo sapiens (Human).